We begin with the raw amino-acid sequence, 314 residues long: Methionyl-tRNA formyltransferase (314 aa).

A (6S)-5,6,7,8-tetrahydrofolate-binding site is contributed by 110–113 (SLLP).

Belongs to the Fmt family.

It carries out the reaction L-methionyl-tRNA(fMet) + (6R)-10-formyltetrahydrofolate = N-formyl-L-methionyl-tRNA(fMet) + (6S)-5,6,7,8-tetrahydrofolate + H(+). In terms of biological role, attaches a formyl group to the free amino group of methionyl-tRNA(fMet). The formyl group appears to play a dual role in the initiator identity of N-formylmethionyl-tRNA by promoting its recognition by IF2 and preventing the misappropriation of this tRNA by the elongation apparatus. The protein is Methionyl-tRNA formyltransferase of Bacillus cereus (strain ATCC 14579 / DSM 31 / CCUG 7414 / JCM 2152 / NBRC 15305 / NCIMB 9373 / NCTC 2599 / NRRL B-3711).